The sequence spans 183 residues: Ribosome rescue factor SmrB (183 aa).

Positions 98-173 (LDLHGLTQLQ…GDAALLVLIE (76 aa)) constitute a Smr domain.

The protein belongs to the SmrB family. As to quaternary structure, associates with collided ribosomes, but not with correctly translating polysomes.

Acts as a ribosome collision sensor. Detects stalled/collided disomes (pairs of ribosomes where the leading ribosome is stalled and a second ribosome has collided with it) and endonucleolytically cleaves mRNA at the 5' boundary of the stalled ribosome. Stalled/collided disomes form a new interface (primarily via the 30S subunits) that binds SmrB. Cleaved mRNA becomes available for tmRNA ligation, leading to ribosomal subunit dissociation and rescue of stalled ribosomes. This Escherichia coli O7:K1 (strain IAI39 / ExPEC) protein is Ribosome rescue factor SmrB.